The sequence spans 43 residues: Protein PsbN (43 aa).

A helical transmembrane segment spans residues 5–27; the sequence is TLVAISISCLLVSFTGYALYTAF.

Belongs to the PsbN family.

It is found in the plastid. The protein localises to the chloroplast thylakoid membrane. May play a role in photosystem I and II biogenesis. This is Protein PsbN from Cryptomeria japonica (Japanese cedar).